The chain runs to 307 residues: Bidirectional sugar transporter SWEET11 (307 aa).

The Extracellular segment spans residues Met-1–Thr-14. Residues Leu-15–Phe-35 form a helical membrane-spanning segment. The MtN3/slv 1 domain maps to Gly-17 to Arg-100. Over Leu-36 to Tyr-47 the chain is Cytoplasmic. A helical transmembrane segment spans residues Ser-48–Val-68. Over Lys-69–Pro-74 the chain is Extracellular. A helical membrane pass occupies residues Leu-75 to Val-95. Topologically, residues Tyr-96–Ala-107 are cytoplasmic. A helical membrane pass occupies residues Phe-108–Val-128. Topologically, residues Pro-129 to Lys-135 are extracellular. The helical transmembrane segment at Phe-136–Ile-156 threads the bilayer. In terms of domain architecture, MtN3/slv 2 spans Phe-136–Pro-219. The Cytoplasmic portion of the chain corresponds to Phe-157 to Met-168. Residues Pro-169–Phe-189 traverse the membrane as a helical segment. Residues Thr-190–Tyr-194 are Extracellular-facing. The helical transmembrane segment at Val-195–Trp-215 threads the bilayer. At Tyr-216–Val-307 the chain is on the cytoplasmic side.

This sequence belongs to the SWEET sugar transporter family. As to quaternary structure, interacts with COPT1 and COPT2. Interacts with APX8. Mostly expressed in panicles and anthers. Also detected in leaves (leaf collar, leaf auricle, leaf ligule), roots, sheaths, culms and culm nodes.

The protein resides in the cell membrane. Functionally, mediates both low-affinity uptake and efflux of sugar across the plasma membrane. Required for pollen viability. Involved in the transport of copper, in cooperation with COPT1 and COPT2. Its function is as follows. Confers sensitivity to bacterial blight mediated by X.oryzae pv. oryzae (Xoo) in its Xa13 allelic form (e.g. cv. IR24), probably by providing the sugar required for the pathogen growth, or by reducing copper contents in xylem. However, a recessive resistance can be associated with the xa13 allele (in which the promoter is mutated leading to reduced induction upon pathogen infection, e.g. cv. IRBB13), specifically toward Xoo Philippine race 6 and Indian race PXO8. The chain is Bidirectional sugar transporter SWEET11 (SWEET11) from Oryza sativa subsp. japonica (Rice).